The following is a 575-amino-acid chain: Arginine--tRNA ligase (575 aa).

The 'HIGH' region signature appears at 136–146 (ANPTGPLHVGH).

Belongs to the class-I aminoacyl-tRNA synthetase family. As to quaternary structure, monomer.

The protein localises to the cytoplasm. It carries out the reaction tRNA(Arg) + L-arginine + ATP = L-arginyl-tRNA(Arg) + AMP + diphosphate. The protein is Arginine--tRNA ligase of Polynucleobacter necessarius subsp. necessarius (strain STIR1).